Consider the following 398-residue polypeptide: DNA polymerase IV (398 aa).

In terms of domain architecture, UmuC spans 5-187 (IFLVDMNAFF…LSIKSMHGVG (183 aa)). Positions 9 and 105 each coordinate Mg(2+). Glutamate 106 is a catalytic residue.

It belongs to the DNA polymerase type-Y family. As to quaternary structure, monomer. It depends on Mg(2+) as a cofactor.

It is found in the cytoplasm. It catalyses the reaction DNA(n) + a 2'-deoxyribonucleoside 5'-triphosphate = DNA(n+1) + diphosphate. Poorly processive, error-prone DNA polymerase involved in untargeted mutagenesis. Copies undamaged DNA at stalled replication forks, which arise in vivo from mismatched or misaligned primer ends. These misaligned primers can be extended by PolIV. Exhibits no 3'-5' exonuclease (proofreading) activity. May be involved in translesional synthesis, in conjunction with the beta clamp from PolIII. The chain is DNA polymerase IV from Alkaliphilus oremlandii (strain OhILAs) (Clostridium oremlandii (strain OhILAs)).